A 284-amino-acid chain; its full sequence is RNase adapter protein RapZ (284 aa).

ATP is bound at residue 8–15 (GRSGSGKS). GTP is bound at residue 56–59 (DVRN). An RNA-binding region spans residues 266–284 (RSRGKNVQSRHRTLEKRRS).

This sequence belongs to the RapZ-like family. RapZ subfamily. Homotrimer.

Its function is as follows. Modulates the synthesis of GlmS, by affecting the processing and stability of the regulatory small RNA GlmZ. When glucosamine-6-phosphate (GlcN6P) concentrations are high in the cell, RapZ binds GlmZ and targets it to cleavage by RNase E. Consequently, GlmZ is inactivated and unable to activate GlmS synthesis. Under low GlcN6P concentrations, RapZ is sequestered and inactivated by an other regulatory small RNA, GlmY, preventing GlmZ degradation and leading to synthesis of GlmS. This chain is RNase adapter protein RapZ, found in Erwinia tasmaniensis (strain DSM 17950 / CFBP 7177 / CIP 109463 / NCPPB 4357 / Et1/99).